We begin with the raw amino-acid sequence, 78 residues long: U23-theraphotoxin-Cg1a 1 (78 aa).

A signal peptide spans 1-21; sequence MKTSVLVTVLGLAVISVLCSA. The propeptide occupies 22-49; sequence SQDEEQDMYDELLSAVFEVNDELQSEAR. 3 cysteine pairs are disulfide-bonded: C50/C64, C57/C69, and C63/C75.

The protein belongs to the neurotoxin 10 (Hwtx-1) family. 64 (Jztx-20) subfamily. In terms of tissue distribution, expressed by the venom gland.

The protein localises to the secreted. Its function is as follows. Probable ion channel inhibitor. This Chilobrachys guangxiensis (Chinese earth tiger tarantula) protein is U23-theraphotoxin-Cg1a 1.